The sequence spans 122 residues: Small ribosomal subunit protein uS12 (122 aa).

3-methylthioaspartic acid is present on D89.

Belongs to the universal ribosomal protein uS12 family. Part of the 30S ribosomal subunit. Contacts proteins S8 and S17. May interact with IF1 in the 30S initiation complex.

Functionally, with S4 and S5 plays an important role in translational accuracy. In terms of biological role, interacts with and stabilizes bases of the 16S rRNA that are involved in tRNA selection in the A site and with the mRNA backbone. Located at the interface of the 30S and 50S subunits, it traverses the body of the 30S subunit contacting proteins on the other side and probably holding the rRNA structure together. The combined cluster of proteins S8, S12 and S17 appears to hold together the shoulder and platform of the 30S subunit. This chain is Small ribosomal subunit protein uS12, found in Neorickettsia sennetsu (strain ATCC VR-367 / Miyayama) (Ehrlichia sennetsu).